A 439-amino-acid chain; its full sequence is DNA damage-inducible protein 1 (439 aa).

Residues 1-82 (MQITIAIQDT…LALHVRETQR (82 aa)) form the Ubiquitin-like domain. The interval 82–101 (RATAVPESQQGRPAAPPQQD) is disordered. Residue Asp-220 is part of the active site. Residues 333 to 398 (QDEPTIEGPG…PAPRAPQARS (66 aa)) form a disordered region. Composition is skewed to low complexity over residues 364–375 (GQAGPSTAAQPG) and 383–398 (PASASAPAPRAPQARS). One can recognise a UBA domain in the interval 398–438 (SFPREHIEQLVALGADEQKAIRALEATDGNVEYAASLIFEG).

It belongs to the DDI1 family. As to quaternary structure, binds ubiquitin and polyubiquitinated proteins.

It localises to the cytoplasm. In terms of biological role, probable aspartic protease. May be involved in the regulation of exocytosis. Acts as a linker between the 19S proteasome and polyubiquitinated proteins via UBA domain interactions with ubiquitin for their subsequent degradation. Required for S-phase checkpoint control. This Neurospora crassa (strain ATCC 24698 / 74-OR23-1A / CBS 708.71 / DSM 1257 / FGSC 987) protein is DNA damage-inducible protein 1 (ddi-1).